A 262-amino-acid polypeptide reads, in one-letter code: Octanoyltransferase (262 aa).

In terms of domain architecture, BPL/LPL catalytic spans 60 to 248 (GTADELVWLV…AFEMVFGPTR (189 aa)). Substrate is bound by residues 99-106 (RGGEYTYH), 179-181 (AIG), and 192-194 (GLS). C210 acts as the Acyl-thioester intermediate in catalysis.

It belongs to the LipB family.

The protein localises to the cytoplasm. The enzyme catalyses octanoyl-[ACP] + L-lysyl-[protein] = N(6)-octanoyl-L-lysyl-[protein] + holo-[ACP] + H(+). Its pathway is protein modification; protein lipoylation via endogenous pathway; protein N(6)-(lipoyl)lysine from octanoyl-[acyl-carrier-protein]: step 1/2. Its function is as follows. Catalyzes the transfer of endogenously produced octanoic acid from octanoyl-acyl-carrier-protein onto the lipoyl domains of lipoate-dependent enzymes. Lipoyl-ACP can also act as a substrate although octanoyl-ACP is likely to be the physiological substrate. This is Octanoyltransferase from Sinorhizobium medicae (strain WSM419) (Ensifer medicae).